The primary structure comprises 347 residues: Endophilin-A3 (347 aa).

The membrane-binding amphipathic helix stretch occupies residues 1-21 (MSVAGLKKQFHKASQLFSEKI). The BAR domain maps to 18 to 249 (SEKISGAEGT…LELRIALASQ (232 aa)). A required for dimerization upon membrane association region spans residues 60–87 (PNPAYRAKLGMLNTMSKLRGQVKATGYP). Residues 180–201 (EEEIRQAVEKFEESKELAERSM) adopt a coiled-coil conformation. Residues 218–254 (FVEAALDYHRQSTEILQELQNKLELRIALASQVPRRD) form an interaction with ARC region. A disordered region spans residues 255–284 (YMPKPVNTSSTNANGVEPSSSSKLTGTDIP). A compositionally biased stretch (polar residues) spans 260–284 (VNTSSTNANGVEPSSSSKLTGTDIP). An SH3 domain is found at 285-344 (SDQPCCRGLYDFEPENEGELGFKEGDIITLTNQIDENWYEGMLRGESGFFPINYVEVIVP).

It belongs to the endophilin family. As to quaternary structure, interacts with SGIP1 and DYDC1. Interacts with FASLG. Interacts with ATXN2. Interacts with BIN2. Interacts with ARC, DNM1 and SYNJ1. Expressed at high level in testis and at lower level in brain and liver.

It is found in the cytoplasm. It localises to the early endosome membrane. Functionally, implicated in endocytosis. May recruit other proteins to membranes with high curvature. This is Endophilin-A3 (Sh3gl3) from Rattus norvegicus (Rat).